We begin with the raw amino-acid sequence, 339 residues long: Delta(9)-fatty-acid desaturase fat-6 (339 aa).

4 helical membrane-spanning segments follow: residues 52–72 (VALF…LIFE), 77–97 (TVIF…AGAH), 195–215 (YFPL…VYFW), and 219–241 (AFIA…TWCI).

It belongs to the fatty acid desaturase type 1 family. Expressed in the intestine in adult worms and in all four larval stages. Additional expression in the hypodermis in all life stages.

It localises to the membrane. It catalyses the reaction octadecanoyl-CoA + 2 Fe(II)-[cytochrome b5] + O2 + 2 H(+) = (9Z)-octadecenoyl-CoA + 2 Fe(III)-[cytochrome b5] + 2 H2O. The enzyme catalyses hexadecanoyl-CoA + 2 Fe(II)-[cytochrome b5] + O2 + 2 H(+) = (9Z)-hexadecenoyl-CoA + 2 Fe(III)-[cytochrome b5] + 2 H2O. It carries out the reaction heptadecanoyl-CoA + 2 Fe(II)-[cytochrome b5] + O2 + 2 H(+) = (9Z)-heptadecenoyl-CoA + 2 Fe(III)-[cytochrome b5] + 2 H2O. The catalysed reaction is (11E)-octadecenoyl-CoA + 2 Fe(II)-[cytochrome b5] + O2 + 2 H(+) = (9Z,11E)-octadecadienoyl-CoA + 2 Fe(III)-[cytochrome b5] + 2 H2O. Its pathway is lipid metabolism; monounsaturated fatty acid biosynthesis. It functions in the pathway lipid metabolism; fatty acid metabolism. Delta(9)-fatty acid desaturase that acts preferentially on stearoyl-CoA (octadecanoyl-CoA) producing the monounsaturated oleoyl-CoA ((9Z)-octadecenoyl-CoA), one of the most abundant monounsaturated fatty acid in Caenorhabditis elegans phospholipids and triacylglycerols. Also acts on palmitoyl-CoA (hexadecanoyl-CoA), heptadecanoyl-CoA and (11E)-octadecenoyl-CoA (trans-vaccenoyl-CoA), the monounsaturated fatty acids (MUFAs) produced are further used as substrates to synthesize polyunsaturated fatty acids (PUFAs) by several other desaturases and elongases. Unlike plants, Caenorhabditis elegans desaturases seem to use fatty acyl-CoAs as substrates. In Caenorhabditis elegans, this protein is Delta(9)-fatty-acid desaturase fat-6 (fat-6).